A 215-amino-acid chain; its full sequence is uncharacterized protein (215 aa).

A helical membrane pass occupies residues 98 to 119; the sequence is AAALAVAVASLCVCTLLLTHIV.

The protein localises to the membrane. This is an uncharacterized protein from Treponema pallidum (strain Nichols).